Consider the following 122-residue polypeptide: Truncated CrmB protein (122 aa).

Functionally, the protein is truncated in this strain and presumably inactive. It has similarities with variola virus CrmB, but the product is inactivated due to several premature stop codons. The chain is Truncated CrmB protein (OPG002) from Bos taurus (Bovine).